The following is a 1813-amino-acid chain: Latent-transforming growth factor beta-binding protein 2 (1813 aa).

The first 35 residues, 1 to 35 (MRAPTTARCSGCIQRVRWRGFLPLVLAVLMGTSHA), serve as a signal peptide directing secretion. The tract at residues 94–115 (NPGWLAEAEARRPPRTQQLRRV) is heparin-binding. A disordered region spans residues 103–152 (ARRPPRTQQLRRVQPPVQTRRSHPRGQQQIAARAAPSVARLETPQRPAAA). A compositionally biased stretch (polar residues) spans 108-132 (RTQQLRRVQPPVQTRRSHPRGQQQI). The N-linked (GlcNAc...) asparagine glycan is linked to asparagine 175. The EGF-like 1 domain maps to 181 to 213 (IKPVCQPPCQNRGSCSRPQVCICRSGFRGARCE). 3 disulfide bridges follow: cysteine 185–cysteine 195, cysteine 189–cysteine 201, and cysteine 203–cysteine 212. The segment at 220 to 305 (EFDPQNARPV…QLMSNALPSG (86 aa)) is disordered. A heparin-binding region spans residues 226-243 (ARPVPRRSVERAPGPHRS). Positions 257-266 (LVPPPSPPPS) are enriched in pro residues. Residues 293–302 (ANGQLMSNAL) are compositionally biased toward polar residues. N-linked (GlcNAc...) asparagine glycosylation occurs at asparagine 328. A heparin-binding site is contributed by 329–339 (LTEKIKKIKVV). Positions 381–413 (RIYFCQIPCLNGGRCIGRDECWCPANSTGKFCH) constitute an EGF-like 2 domain. 3 cysteine pairs are disulfide-bonded: cysteine 385–cysteine 395, cysteine 389–cysteine 401, and cysteine 403–cysteine 412. The N-linked (GlcNAc...) asparagine glycan is linked to asparagine 406. At serine 491 the chain carries Phosphoserine. Residues 492-524 (VETRASHRPHGNLGHSPWASNSIPARAGEAPRP) are disordered. One can recognise a TB 1 domain in the interval 536-588 (GQCYLSTVNGQCANPLGSLTSQEDCCGSVGTFWGVTSCAPCPPRQEGPAFPVI). Cystine bridges form between cysteine 538–cysteine 560, cysteine 547–cysteine 573, and cysteine 561–cysteine 576. N-linked (GlcNAc...) asparagine glycosylation is present at asparagine 603. The EGF-like 3; calcium-binding domain occupies 609 to 649 (DINECLTLGLCKDSECVNTRGSYLCTCRPGLMLDPSRSRCV). 7 disulfides stabilise this stretch: cysteine 613-cysteine 624, cysteine 619-cysteine 633, cysteine 635-cysteine 648, cysteine 661-cysteine 683, cysteine 670-cysteine 696, cysteine 684-cysteine 699, and cysteine 685-cysteine 711. In terms of domain architecture, TB 2 spans 659-711 (GLCYRSLGSGTCTLPLVHRITKQICCCSRVGKAWGSTCEQCPLPGTEAFREIC). 2 disordered regions span residues 730–761 (KAEEEELASPLREQTEQSTAPPPGQAERQPLR) and 787–819 (SAPHLPARVPGDATGRPAPSLPGQGIPESPAEE). The EGF-like 4 domain maps to 835–877 (DFDPCFAGASNICGPGTCVSLPNGYRCVCSPGYQLHPSQDYCT). 49 cysteine pairs are disulfide-bonded: cysteine 839-cysteine 852, cysteine 847-cysteine 861, cysteine 863-cysteine 876, cysteine 882-cysteine 893, cysteine 887-cysteine 902, cysteine 904-cysteine 919, cysteine 925-cysteine 936, cysteine 931-cysteine 945, cysteine 947-cysteine 959, cysteine 965-cysteine 976, cysteine 971-cysteine 985, cysteine 988-cysteine 999, cysteine 1005-cysteine 1016, cysteine 1011-cysteine 1025, cysteine 1027-cysteine 1040, cysteine 1046-cysteine 1057, cysteine 1052-cysteine 1066, cysteine 1069-cysteine 1082, cysteine 1088-cysteine 1099, cysteine 1094-cysteine 1108, cysteine 1111-cysteine 1124, cysteine 1130-cysteine 1142, cysteine 1137-cysteine 1151, cysteine 1153-cysteine 1165, cysteine 1171-cysteine 1183, cysteine 1177-cysteine 1192, cysteine 1194-cysteine 1207, cysteine 1213-cysteine 1224, cysteine 1219-cysteine 1233, cysteine 1235-cysteine 1249, cysteine 1255-cysteine 1268, cysteine 1263-cysteine 1277, cysteine 1281-cysteine 1293, cysteine 1299-cysteine 1311, cysteine 1305-cysteine 1320, cysteine 1322-cysteine 1335, cysteine 1341-cysteine 1353, cysteine 1348-cysteine 1362, cysteine 1364-cysteine 1378, cysteine 1405-cysteine 1428, cysteine 1415-cysteine 1440, cysteine 1429-cysteine 1443, cysteine 1430-cysteine 1455, cysteine 1481-cysteine 1494, cysteine 1489-cysteine 1503, cysteine 1505-cysteine 1518, cysteine 1524-cysteine 1534, cysteine 1529-cysteine 1543, and cysteine 1545-cysteine 1558. The region spanning 878 to 920 (DDNECMRNPCEGRGRCVNSVGSYSCLCYPGYTLVTLGDTQECQ) is the EGF-like 5; calcium-binding domain. The region spanning 921-960 (DIDECEQPGVCSGGRCSNTEGSYHCECDRGYIMVRKGHCQ) is the EGF-like 6; calcium-binding domain. The EGF-like 7; calcium-binding domain occupies 961–1000 (DINECRHPGTCPDGRCVNSPGSYTCLACEEGYVGQSGSCV). The 41-residue stretch at 1001–1041 (DVNECLTPGICTHGRCINMEGSFRCSCEPGYEVTPDKKGCR) folds into the EGF-like 8; calcium-binding domain. The EGF-like 9; calcium-binding domain maps to 1042–1083 (DVDECASRASCPTGLCLNTEGSFTCSACQSGYWVNEDGTACE). One can recognise an EGF-like 10; calcium-binding domain in the interval 1084–1125 (DLDECAFPGVCPTGVCTNTVGSFSCKDCDQGYRPNPLGNRCE). The EGF-like 11; calcium-binding domain occupies 1126 to 1166 (DVDECEGPQSSCRGGECKNTEGSYQCLCHQGFQLVNGTMCE). N-linked (GlcNAc...) asparagine glycosylation is present at asparagine 1161. An EGF-like 12; calcium-binding domain is found at 1167 to 1208 (DVNECVGEEHCAPHGECLNSLGSFFCLCAPGFASAEGGTRCQ). The region spanning 1209–1250 (DVDECAATDPCPGGHCVNTEGSFSCLCETASFQPSPDSGECL) is the EGF-like 13; calcium-binding domain. In terms of domain architecture, EGF-like 14; calcium-binding spans 1251–1294 (DIDECEDREDPVCGAWRCENSPGSYRCILDCQPGFYVAPNGDCI). The EGF-like 15; calcium-binding domain maps to 1295–1336 (DIDECANDTVCGNHGFCDNTDGSFRCLCDQGFETSPSGWECV). The N-linked (GlcNAc...) asparagine glycan is linked to asparagine 1301. The EGF-like 16; calcium-binding domain occupies 1337 to 1379 (DVNECELMMAVCGDALCENVEGSFLCLCASDLEEYDAEEGHCR). Residues 1403 to 1455 (MECYSEHNGGPPCSQILGQNSTQAECCCTQGARWGKACAPCPSEDSVEFSQLC) form the TB 3 domain. Asparagine 1422 is a glycosylation site (N-linked (GlcNAc...) asparagine). Positions 1477–1519 (DADECVLFGPALCQNGRCSNIVPGYICLCNPGYHYDASSRKCQ) constitute an EGF-like 17; calcium-binding domain. The EGF-like 18; calcium-binding domain occupies 1520–1559 (DHNECQDLACENGECVNQEGSFHCLCNPPLTLDLSGQRCV). Residue asparagine 1560 is glycosylated (N-linked (GlcNAc...) asparagine). Positions 1576–1628 (DICWKKVTNDVCSQPLRGHHTTYTECCCQDGEAWSQQCALCPPRSSEVYAQLC) constitute a TB 4 domain. Cystine bridges form between cysteine 1578–cysteine 1601, cysteine 1587–cysteine 1613, cysteine 1602–cysteine 1616, and cysteine 1603–cysteine 1628. Positions 1631-1813 (ARIEAERGAG…PGPPHCAAKE (183 aa)) are C-terminal domain. Residues 1671 to 1717 (YLGPEDTAPEPPFSNPASQPGDNTPVLEPPLQPSELQPHYLASHSEP) are disordered. The region spanning 1725–1765 (QAEECGILNGCENGRCVRVREGYTCDCFEGFQLDAPTLACV) is the EGF-like 19; calcium-binding domain. 6 cysteine pairs are disulfide-bonded: cysteine 1729-cysteine 1740, cysteine 1735-cysteine 1749, cysteine 1751-cysteine 1764, cysteine 1770-cysteine 1785, cysteine 1780-cysteine 1794, and cysteine 1796-cysteine 1809. The EGF-like 20; calcium-binding domain occupies 1766–1810 (DVNECEDLNGPARLCAHGHCENTEGSYRCHCSPGYVAEPGPPHCA).

Belongs to the LTBP family. Forms part of the large latent transforming growth factor beta precursor complex; removal is essential for activation of complex. Interacts with SDC4. Interacts (via C-terminal domain) with FBN1 (via N-terminal domain) in a Ca(+2)-dependent manner. In terms of processing, N-Glycosylated. Contains hydroxylated asparagine residues. In terms of tissue distribution, expressed in the anterior chamber of the eye.

It localises to the secreted. The protein localises to the extracellular space. Its subcellular location is the extracellular matrix. Its function is as follows. May play an integral structural role in elastic-fiber architectural organization and/or assembly. The polypeptide is Latent-transforming growth factor beta-binding protein 2 (Ltbp2) (Mus musculus (Mouse)).